A 297-amino-acid chain; its full sequence is Acetylglutamate kinase (297 aa).

Substrate is bound by residues 70–71 (GG), Arg-92, and Asn-194.

This sequence belongs to the acetylglutamate kinase family. ArgB subfamily.

It localises to the cytoplasm. It carries out the reaction N-acetyl-L-glutamate + ATP = N-acetyl-L-glutamyl 5-phosphate + ADP. Its pathway is amino-acid biosynthesis; L-arginine biosynthesis; N(2)-acetyl-L-ornithine from L-glutamate: step 2/4. In terms of biological role, catalyzes the ATP-dependent phosphorylation of N-acetyl-L-glutamate. This chain is Acetylglutamate kinase, found in Janthinobacterium sp. (strain Marseille) (Minibacterium massiliensis).